A 428-amino-acid chain; its full sequence is Tyrosine--tRNA ligase (428 aa).

Tyr-37 is an L-tyrosine binding site. The 'HIGH' region motif lies at 42-51; that stretch reads PTGSSLHAGH. L-tyrosine contacts are provided by Tyr-175 and Gln-179. The short motif at 235–239 is the 'KMSKS' region element; sequence KFGKS. Lys-238 contacts ATP. The S4 RNA-binding domain maps to 358 to 415; that stretch reads ATILDLLVESGLEKSKGAARRTVGEGGAYVNNQRIEDIEWSPSAEELLHGSWLVLRKG.

It belongs to the class-I aminoacyl-tRNA synthetase family. TyrS type 1 subfamily. Homodimer.

The protein resides in the cytoplasm. It carries out the reaction tRNA(Tyr) + L-tyrosine + ATP = L-tyrosyl-tRNA(Tyr) + AMP + diphosphate + H(+). Catalyzes the attachment of tyrosine to tRNA(Tyr) in a two-step reaction: tyrosine is first activated by ATP to form Tyr-AMP and then transferred to the acceptor end of tRNA(Tyr). The chain is Tyrosine--tRNA ligase from Corynebacterium jeikeium (strain K411).